The sequence spans 596 residues: MNLCNSRFSVTFVRQCSTILTSPSAGIIQNRGSLTTKVPHWISSSLSCAHHTFQRTMNLTGQRGSRDSTGATGGNAPAGSGAGAPPPFQHPHCDRAAMYAQPVRKMSTKGGSYDYDLIVIGGGSAGLACAKEAVLNGARVACLDFVKPTPTLGTKWGVGGTCVNVGCIPKKLMHQASLLGEAVHEAAAYGWNVDEKIKPDWHKLVQSVQNHIKSVNWVTRVDLRDKKVEYINGLGSFVDSHTLLAKLKSGERTITAQTFVIAVGGRPRYPDIPGAVEYGITSDDLFSLDREPGKTLVVGAGYIGLECAGFLKGLGYEPTVMVRSIVLRGFDQQMAELVAASMEERGIPFLRKTVPLSVEKQDDGKLLVKYKNVETGEEAEDVYDTVLWAIGRKGLVDDLNLPNAGVTVQKDKIPVDSQEATNVANIYAVGDIIYGKPELTPVAVLAGRLLARRLYGGSTQRMDYKDVATTVFTPLEYACVGLSEEDAVKQFGADEIEVFHGYYKPTEFFIPQKSVRYCYLKAVAERHGDQRVYGLHYIGPVAGEVIQGFAAALKSGLTINTLINTVGIHPTTAEEFTRLAITKRSGLDPTPASCCS.

Residues 59 to 87 (LTGQRGSRDSTGATGGNAPAGSGAGAPPP) are disordered. Residues 68 to 79 (STGATGGNAPAG) show a composition bias toward low complexity. Residues 120–126 (IGGGSAG), 143–147 (LDFVK), 159–170 (GGTCVNVGCIPK), 233–235 (GLG), 262–266 (AVGGR), Ser282, Phe286, and Tyr302 contribute to the FAD site. The cysteines at positions 162 and 167 are disulfide-linked. Residues 322–328 (VRSIVLR) and Pro355 contribute to the NADP(+) site. FAD contacts are provided by residues 392 to 399 (RKGLVDDL), 429 to 432 (VGDI), 438 to 443 (ELTPVA), and Phe472. His569 serves as the catalytic Proton acceptor. Residue Pro570 coordinates FAD. Cysteines 594 and 595 form a disulfide.

The protein belongs to the class-I pyridine nucleotide-disulfide oxidoreductase family. In terms of assembly, homodimer. It depends on FAD as a cofactor. In terms of tissue distribution, during embryogenesis, expression is seen in germ cell progenitors, developing midgut, hindgut and proventriculus.

Its subcellular location is the mitochondrion. The protein resides in the cytoplasm. The enzyme catalyses [thioredoxin]-dithiol + NADP(+) = [thioredoxin]-disulfide + NADPH + H(+). Thioredoxin system is a major player in glutathione metabolism, due to the demonstrated absence of a glutathione reductase. Functionally interacts with the Sod/Cat reactive oxidation species (ROS) defense system and thereby has a role in preadult development and life span. Lack of a glutathione reductase suggests antioxidant defense in Drosophila, and probably in related insects, differs fundamentally from that in other organisms. This chain is Thioredoxin reductase 1, mitochondrial, found in Drosophila melanogaster (Fruit fly).